Consider the following 259-residue polypeptide: Protoheme IX farnesyltransferase (259 aa).

The next 8 helical transmembrane spans lie at 15 to 35, 61 to 81, 83 to 103, 109 to 129, 137 to 157, 182 to 202, 208 to 228, and 236 to 256; these read LICL…NGVL, ATVA…TFLP, LTTA…TLWF, WGVV…ASAV, PLIL…ALAL, VCIF…WFTG, FAIE…LYLV, and AFQA…IDIC.

The protein belongs to the UbiA prenyltransferase family. Protoheme IX farnesyltransferase subfamily.

Its subcellular location is the cell inner membrane. The enzyme catalyses heme b + (2E,6E)-farnesyl diphosphate + H2O = Fe(II)-heme o + diphosphate. Its pathway is porphyrin-containing compound metabolism; heme O biosynthesis; heme O from protoheme: step 1/1. Functionally, converts heme B (protoheme IX) to heme O by substitution of the vinyl group on carbon 2 of heme B porphyrin ring with a hydroxyethyl farnesyl side group. The sequence is that of Protoheme IX farnesyltransferase from Geotalea uraniireducens (strain Rf4) (Geobacter uraniireducens).